The chain runs to 23 residues: Phallacidin proprotein 1 (23 aa).

A propeptide is located at residue Pro1. Positions Ala2–Pro8 form a cross-link, cyclopeptide (Ala-Pro). Residues Trp3 to Cys7 constitute a cross-link (2'-cysteinyl-6'-hydroxytryptophan sulfoxide (Trp-Cys)). Residues Cys9 to Arg23 constitute a propeptide that is removed on maturation.

This sequence belongs to the MSDIN fungal toxin family. In terms of processing, processed by the macrocyclase-peptidase enzyme POPB to yield a toxic cyclic heptapeptide. POPB first removes 10 residues from the N-terminus. Conformational trapping of the remaining peptide forces the enzyme to release this intermediate rather than proceed to macrocyclization. The enzyme rebinds the remaining peptide in a different conformation and catalyzes macrocyclization of the N-terminal 7 residues.

Functionally, toxin that belongs to the bicyclic heptapeptides called phallotoxins. Although structurally related to amatoxins, phallotoxins have a different mode of action, which is the stabilization of F-actin. Phallotoxins are poisonous when administered parenterally, but not orally because of poor absorption. This is Phallacidin proprotein 1 from Amanita exitialis (Guangzhou destroying angel).